A 366-amino-acid polypeptide reads, in one-letter code: tRNA N6-adenosine threonylcarbamoyltransferase (366 aa).

Fe cation is bound by residues H119 and H123. Substrate-binding positions include 142 to 146, D175, G188, D192, and N281; that span reads LVSGG. Residue D309 participates in Fe cation binding.

This sequence belongs to the KAE1 / TsaD family. The cofactor is Fe(2+).

The protein resides in the cytoplasm. The enzyme catalyses L-threonylcarbamoyladenylate + adenosine(37) in tRNA = N(6)-L-threonylcarbamoyladenosine(37) in tRNA + AMP + H(+). Required for the formation of a threonylcarbamoyl group on adenosine at position 37 (t(6)A37) in tRNAs that read codons beginning with adenine. Is involved in the transfer of the threonylcarbamoyl moiety of threonylcarbamoyl-AMP (TC-AMP) to the N6 group of A37, together with TsaE and TsaB. TsaD likely plays a direct catalytic role in this reaction. This chain is tRNA N6-adenosine threonylcarbamoyltransferase, found in Synechococcus sp. (strain JA-3-3Ab) (Cyanobacteria bacterium Yellowstone A-Prime).